A 316-amino-acid chain; its full sequence is Tetrahydromethanopterin S-methyltransferase subunit H (316 aa).

Belongs to the MtrH family. In terms of assembly, the complex is composed of 8 subunits; MtrA, MtrB, MtrC, MtrD, MtrE, MtrF, MtrG and MtrH.

It catalyses the reaction 5-methyl-5,6,7,8-tetrahydromethanopterin + coenzyme M + 2 Na(+)(in) = 5,6,7,8-tetrahydromethanopterin + methyl-coenzyme M + 2 Na(+)(out). It participates in one-carbon metabolism; methanogenesis from CO(2); methyl-coenzyme M from 5,10-methylene-5,6,7,8-tetrahydromethanopterin: step 2/2. In terms of biological role, part of a complex that catalyzes the formation of methyl-coenzyme M and tetrahydromethanopterin from coenzyme M and methyl-tetrahydromethanopterin. This is an energy-conserving, sodium-ion translocating step. MtrH catalyzes the transfer of the methyl group from methyl-tetrahydromethanopterin to the corrinoid prosthetic group of MtrA. The polypeptide is Tetrahydromethanopterin S-methyltransferase subunit H (Methanosarcina acetivorans (strain ATCC 35395 / DSM 2834 / JCM 12185 / C2A)).